The chain runs to 183 residues: Phosphinothricin N-acetyltransferase (183 aa).

The N-acetyltransferase domain maps to 8–169 (VEIRPATAAD…DVGFWQRDFE (162 aa)). Residues 91–93 (VYV), 99–104 (RLGLGS), and Asn130 contribute to the acetyl-CoA site.

The protein belongs to the acetyltransferase family. PAT/BAR subfamily.

It carries out the reaction phosphinothricin + acetyl-CoA = N-acetylphosphinothricin + CoA + H(+). In terms of biological role, inactivates phosphinothricin (PPT) by transfer of an acetyl group from acetyl CoA. This enzyme is an effector of phosphinothricin tripeptide (PTT or bialaphos) resistance. The polypeptide is Phosphinothricin N-acetyltransferase (Streptomyces viridochromogenes (strain DSM 40736 / JCM 4977 / BCRC 1201 / Tue 494)).